The primary structure comprises 106 residues: ATP-dependent Clp protease adapter protein ClpS (106 aa).

The interval 1-22 is disordered; the sequence is MNEYHNSLKSKESVKDERQQKL. Basic and acidic residues predominate over residues 9 to 20; the sequence is KSKESVKDERQQ.

Belongs to the ClpS family. As to quaternary structure, binds to the N-terminal domain of the chaperone ClpA.

Involved in the modulation of the specificity of the ClpAP-mediated ATP-dependent protein degradation. This Photorhabdus laumondii subsp. laumondii (strain DSM 15139 / CIP 105565 / TT01) (Photorhabdus luminescens subsp. laumondii) protein is ATP-dependent Clp protease adapter protein ClpS.